The following is a 179-amino-acid chain: NADH-quinone oxidoreductase subunit B (179 aa).

4 residues coordinate [4Fe-4S] cluster: C52, C53, C117, and C147.

This sequence belongs to the complex I 20 kDa subunit family. As to quaternary structure, NDH-1 is composed of 14 different subunits. Subunits NuoB, C, D, E, F, and G constitute the peripheral sector of the complex. [4Fe-4S] cluster serves as cofactor.

It localises to the cell inner membrane. It carries out the reaction a quinone + NADH + 5 H(+)(in) = a quinol + NAD(+) + 4 H(+)(out). In terms of biological role, NDH-1 shuttles electrons from NADH, via FMN and iron-sulfur (Fe-S) centers, to quinones in the respiratory chain. The immediate electron acceptor for the enzyme in this species is believed to be ubiquinone. Couples the redox reaction to proton translocation (for every two electrons transferred, four hydrogen ions are translocated across the cytoplasmic membrane), and thus conserves the redox energy in a proton gradient. This chain is NADH-quinone oxidoreductase subunit B, found in Ehrlichia chaffeensis (strain ATCC CRL-10679 / Arkansas).